Here is a 267-residue protein sequence, read N- to C-terminus: Phosphatidylglycerol--prolipoprotein diacylglyceryl transferase (267 aa).

Transmembrane regions (helical) follow at residues 21 to 41 (VSLH…YWLG), 60 to 80 (LLFN…VFFY), and 95 to 115 (IWEG…AMLW). Arg-143 contacts a 1,2-diacyl-sn-glycero-3-phospho-(1'-sn-glycerol). 2 consecutive transmembrane segments (helical) span residues 203–223 (GSVA…VEYF) and 240–260 (GQLL…VAYY).

It belongs to the Lgt family.

It is found in the cell inner membrane. It catalyses the reaction L-cysteinyl-[prolipoprotein] + a 1,2-diacyl-sn-glycero-3-phospho-(1'-sn-glycerol) = an S-1,2-diacyl-sn-glyceryl-L-cysteinyl-[prolipoprotein] + sn-glycerol 1-phosphate + H(+). Its pathway is protein modification; lipoprotein biosynthesis (diacylglyceryl transfer). Its function is as follows. Catalyzes the transfer of the diacylglyceryl group from phosphatidylglycerol to the sulfhydryl group of the N-terminal cysteine of a prolipoprotein, the first step in the formation of mature lipoproteins. The chain is Phosphatidylglycerol--prolipoprotein diacylglyceryl transferase from Glaesserella parasuis serovar 5 (strain SH0165) (Haemophilus parasuis).